A 404-amino-acid chain; its full sequence is UPF0674 endoplasmic reticulum membrane protein YNR021W (404 aa).

N-acetylserine is present on S2. N-linked (GlcNAc...) asparagine glycosylation is present at N44. The helical transmembrane segment at 49 to 68 (LCALGVLFLVYAFYKFGNSV) threads the bilayer. N98 carries N-linked (GlcNAc...) asparagine glycosylation. Residues 369-404 (AKRRQLKASGQQEKVDQKMKEKRERRLKNKQRTRFQ) are disordered. Over residues 381 to 392 (EKVDQKMKEKRE) the composition is skewed to basic and acidic residues. Residues 393-404 (RRLKNKQRTRFQ) show a composition bias toward basic residues.

This sequence belongs to the UPF0674 family.

The protein localises to the endoplasmic reticulum membrane. The polypeptide is UPF0674 endoplasmic reticulum membrane protein YNR021W (Saccharomyces cerevisiae (strain ATCC 204508 / S288c) (Baker's yeast)).